The chain runs to 123 residues: Large ribosomal subunit protein mL52 (123 aa).

The transit peptide at 1-23 directs the protein to the mitochondrion; it reads MAALGTVLFTGVRRLHCSVAAWA. The span at 99-109 shows a compositional bias: basic and acidic residues; that stretch reads QEEQRKQENAL. Positions 99–123 are disordered; that stretch reads QEEQRKQENALKPKGASLKSPLPSQ.

Belongs to the mitochondrion-specific ribosomal protein mL52 family. As to quaternary structure, component of the mitochondrial large ribosomal subunit (mt-LSU). Mature mammalian 55S mitochondrial ribosomes consist of a small (28S) and a large (39S) subunit. The 28S small subunit contains a 12S ribosomal RNA (12S mt-rRNA) and 30 different proteins. The 39S large subunit contains a 16S rRNA (16S mt-rRNA), a copy of mitochondrial valine transfer RNA (mt-tRNA(Val)), which plays an integral structural role, and 52 different proteins. mL52 connects the central protuberance to the body of the ribosome.

It is found in the mitochondrion. The sequence is that of Large ribosomal subunit protein mL52 (MRPL52) from Homo sapiens (Human).